A 325-amino-acid chain; its full sequence is MIDDLIIILIKSAVVILLLFTAAAYMTFLERIVMARLQLRMGPVRVGPFGLFQPLADGIKLLCKERFQPANVETFVYWLAPGISLFTALFIFVLIPFGGVVEIAGRLIYLQIADINVGVVFLLAFSSLAVYGVVLAGWASNNRYSLIGGLRGTAQMISYEIPMGLSLLTVVLSTGTLSLREIVELQQNHWLIWTNPISFIIYFITSFAETNRAPFDLPEAEQELTAGYHTEYGGMKFAAFFLGEYINILAVSAIATTLFFGGWHGPGDIPILWFGLKVAIFVFIFMWVRATMPRFRYDQLMSFGWKVLIPIAILNLIITAYFTLV.

Transmembrane regions (helical) follow at residues 5-25 (LIIILIKSAVVILLLFTAAAY), 75-95 (FVYWLAPGISLFTALFIFVLI), 117-137 (VGVVFLLAFSSLAVYGVVLAG), 157-177 (ISYEIPMGLSLLTVVLSTGTL), 190-210 (WLIWTNPISFIIYFITSFAET), 240-260 (FFLGEYINILAVSAIATTLFF), 268-288 (DIPILWFGLKVAIFVFIFMWV), and 305-325 (WKVLIPIAILNLIITAYFTLV).

The protein belongs to the complex I subunit 1 family. NDH-1 is composed of 14 different subunits. Subunits NuoA, H, J, K, L, M, N constitute the membrane sector of the complex.

The protein localises to the cell inner membrane. The enzyme catalyses a quinone + NADH + 5 H(+)(in) = a quinol + NAD(+) + 4 H(+)(out). In terms of biological role, NDH-1 shuttles electrons from NADH, via FMN and iron-sulfur (Fe-S) centers, to quinones in the respiratory chain. The immediate electron acceptor for the enzyme in this species is believed to be ubiquinone. Couples the redox reaction to proton translocation (for every two electrons transferred, four hydrogen ions are translocated across the cytoplasmic membrane), and thus conserves the redox energy in a proton gradient. This subunit may bind ubiquinone. The chain is NADH-quinone oxidoreductase subunit H from Protochlamydia amoebophila (strain UWE25).